The sequence spans 206 residues: Enterobactin synthase component D (206 aa).

Residues aspartate 107, glutamate 109, and glutamate 152 each coordinate Mg(2+).

This sequence belongs to the P-Pant transferase superfamily. EntD family. EntB, EntD, EntE, and EntF form a multienzyme complex called enterobactin synthase. Mg(2+) is required as a cofactor.

The protein resides in the membrane. The enzyme catalyses apo-[aryl-carrier protein] + CoA = holo-[aryl-carrier protein] + adenosine 3',5'-bisphosphate + H(+). It catalyses the reaction apo-[peptidyl-carrier protein] + CoA = holo-[peptidyl-carrier protein] + adenosine 3',5'-bisphosphate + H(+). The protein operates within siderophore biosynthesis; enterobactin biosynthesis. Involved in the biosynthesis of the siderophore enterobactin (enterochelin), which is a macrocyclic trimeric lactone of N-(2,3-dihydroxybenzoyl)-serine. The serine trilactone serves as a scaffolding for the three catechol functionalities that provide hexadentate coordination for the tightly ligated iron(2+) atoms. Plays an essential role in the assembly of the enterobactin by catalyzing the transfer of the 4'-phosphopantetheine (Ppant) moiety from coenzyme A to the apo-domains of both EntB (ArCP domain) and EntF (PCP domain) to yield their holo-forms which make them competent for the activation of 2,3-dihydroxybenzoate (DHB) and L-serine, respectively. The protein is Enterobactin synthase component D of Escherichia coli O157:H7.